We begin with the raw amino-acid sequence, 144 residues long: Large ribosomal subunit protein uL13 (144 aa).

It belongs to the universal ribosomal protein uL13 family. Part of the 50S ribosomal subunit.

In terms of biological role, this protein is one of the early assembly proteins of the 50S ribosomal subunit, although it is not seen to bind rRNA by itself. It is important during the early stages of 50S assembly. The chain is Large ribosomal subunit protein uL13 from Magnetococcus marinus (strain ATCC BAA-1437 / JCM 17883 / MC-1).